The sequence spans 346 residues: Beta-hexosaminidase (346 aa).

Substrate contacts are provided by residues Asp62, Arg70, Arg134, and 164–165 (KH). His177 functions as the Proton donor/acceptor in the catalytic mechanism. The active-site Nucleophile is Asp249.

This sequence belongs to the glycosyl hydrolase 3 family. NagZ subfamily.

The protein localises to the cytoplasm. It carries out the reaction Hydrolysis of terminal non-reducing N-acetyl-D-hexosamine residues in N-acetyl-beta-D-hexosaminides.. It functions in the pathway cell wall biogenesis; peptidoglycan recycling. In terms of biological role, plays a role in peptidoglycan recycling by cleaving the terminal beta-1,4-linked N-acetylglucosamine (GlcNAc) from peptide-linked peptidoglycan fragments, giving rise to free GlcNAc, anhydro-N-acetylmuramic acid and anhydro-N-acetylmuramic acid-linked peptides. The sequence is that of Beta-hexosaminidase from Actinobacillus succinogenes (strain ATCC 55618 / DSM 22257 / CCUG 43843 / 130Z).